Consider the following 234-residue polypeptide: Two-component response regulator ARR9 (234 aa).

The 138-residue stretch at 10-147 folds into the Response regulatory domain; that stretch reads HVLAVDDSLF…DLNKLKPHMM (138 aa). D80 carries the post-translational modification 4-aspartylphosphate.

The protein belongs to the ARR family. Type-A subfamily. As to quaternary structure, interacts with AHP1 and AHP3. In terms of processing, two-component system major event consists of a His-to-Asp phosphorelay between a sensor histidine kinase (HK) and a response regulator (RR). In plants, the His-to-Asp phosphorelay involves an additional intermediate named Histidine-containing phosphotransfer protein (HPt). This multistep phosphorelay consists of a His-Asp-His-Asp sequential transfer of a phosphate group between first a His and an Asp of the HK protein, followed by the transfer to a conserved His of the HPt protein and finally the transfer to an Asp in the receiver domain of the RR protein. Predominantly expressed in roots.

It is found in the nucleus. Functionally, functions as a response regulator involved in His-to-Asp phosphorelay signal transduction system. Phosphorylation of the Asp residue in the receiver domain activates the ability of the protein to promote the transcription of target genes. Type-A response regulators seem to act as negative regulators of the cytokinin signaling. This Arabidopsis thaliana (Mouse-ear cress) protein is Two-component response regulator ARR9 (ARR9).